Here is a 143-residue protein sequence, read N- to C-terminus: Transcriptional regulator MraZ (143 aa).

2 SpoVT-AbrB domains span residues 5–47 and 76–119; these read TFTP…PRNV and ADEQ…NAES.

The protein belongs to the MraZ family. As to quaternary structure, forms oligomers.

The protein localises to the cytoplasm. The protein resides in the nucleoid. This chain is Transcriptional regulator MraZ, found in Corynebacterium kroppenstedtii (strain DSM 44385 / JCM 11950 / CIP 105744 / CCUG 35717).